A 258-amino-acid polypeptide reads, in one-letter code: Tryptophan synthase alpha chain (258 aa).

Residues Glu-47 and Asp-58 each act as proton acceptor in the active site.

Belongs to the TrpA family. Tetramer of two alpha and two beta chains.

It catalyses the reaction (1S,2R)-1-C-(indol-3-yl)glycerol 3-phosphate + L-serine = D-glyceraldehyde 3-phosphate + L-tryptophan + H2O. The protein operates within amino-acid biosynthesis; L-tryptophan biosynthesis; L-tryptophan from chorismate: step 5/5. Its function is as follows. The alpha subunit is responsible for the aldol cleavage of indoleglycerol phosphate to indole and glyceraldehyde 3-phosphate. The chain is Tryptophan synthase alpha chain from Bacillus mycoides (strain KBAB4) (Bacillus weihenstephanensis).